Consider the following 466-residue polypeptide: UDP-N-acetylmuramoylalanine--D-glutamate ligase (466 aa).

Position 127-133 (127-133) interacts with ATP; sequence GSNGKST.

It belongs to the MurCDEF family.

The protein resides in the cytoplasm. It carries out the reaction UDP-N-acetyl-alpha-D-muramoyl-L-alanine + D-glutamate + ATP = UDP-N-acetyl-alpha-D-muramoyl-L-alanyl-D-glutamate + ADP + phosphate + H(+). It participates in cell wall biogenesis; peptidoglycan biosynthesis. Its function is as follows. Cell wall formation. Catalyzes the addition of glutamate to the nucleotide precursor UDP-N-acetylmuramoyl-L-alanine (UMA). The sequence is that of UDP-N-acetylmuramoylalanine--D-glutamate ligase from Ruegeria pomeroyi (strain ATCC 700808 / DSM 15171 / DSS-3) (Silicibacter pomeroyi).